The sequence spans 354 residues: Neutral protease 2 homolog AN7962 (354 aa).

Positions 1–19 are cleaved as a signal peptide; it reads MKFIAPIALLGMFQAASAS. Positions 20-178 are excised as a propeptide; sequence PVDIKTSNAG…GAQLSKLSKR (159 aa). 2 disulfide bridges follow: C184–C255 and C262–C280. H305 contributes to the Zn(2+) binding site. Residue E306 is part of the active site. Zn(2+) is bound by residues H309 and D320.

It belongs to the peptidase M35 family. Requires Zn(2+) as cofactor.

The protein resides in the secreted. The catalysed reaction is Preferential cleavage of bonds with hydrophobic residues in P1'. Also 3-Asn-|-Gln-4 and 8-Gly-|-Ser-9 bonds in insulin B chain.. Secreted metalloproteinase that allows assimilation of proteinaceous substrates. Shows high activities on basic nuclear substrates such as histone and protamine. The chain is Neutral protease 2 homolog AN7962 from Emericella nidulans (strain FGSC A4 / ATCC 38163 / CBS 112.46 / NRRL 194 / M139) (Aspergillus nidulans).